Here is a 327-residue protein sequence, read N- to C-terminus: ABC transporter periplasmic-binding protein YphF (327 aa).

The first 26 residues, 1-26 (MPTKMRTTRNLLLMATLLGSALFARA), serve as a signal peptide directing secretion.

The protein belongs to the bacterial solute-binding protein 2 family.

Its subcellular location is the periplasm. Probably part of the binding-protein-dependent transport system YphDEF. The sequence is that of ABC transporter periplasmic-binding protein YphF (yphF) from Escherichia coli (strain K12).